We begin with the raw amino-acid sequence, 226 residues long: 2-C-methyl-D-erythritol 4-phosphate cytidylyltransferase (226 aa).

It belongs to the IspD/TarI cytidylyltransferase family. IspD subfamily.

The enzyme catalyses 2-C-methyl-D-erythritol 4-phosphate + CTP + H(+) = 4-CDP-2-C-methyl-D-erythritol + diphosphate. The protein operates within isoprenoid biosynthesis; isopentenyl diphosphate biosynthesis via DXP pathway; isopentenyl diphosphate from 1-deoxy-D-xylulose 5-phosphate: step 2/6. Functionally, catalyzes the formation of 4-diphosphocytidyl-2-C-methyl-D-erythritol from CTP and 2-C-methyl-D-erythritol 4-phosphate (MEP). The sequence is that of 2-C-methyl-D-erythritol 4-phosphate cytidylyltransferase from Bacillus mycoides (strain KBAB4) (Bacillus weihenstephanensis).